Here is a 267-residue protein sequence, read N- to C-terminus: 26S proteasome non-ATPase regulatory subunit 8 homolog A (267 aa).

Met-1 is subject to N-acetylmethionine. Positions 79 to 251 (DAFERDFFQL…APCKEIPSLQ (173 aa)) constitute a PCI domain.

This sequence belongs to the proteasome subunit S14 family. As to quaternary structure, component of the 19S regulatory particle (RP/PA700) lid subcomplex of the 26S proteasome. The 26S proteasome is composed of a core protease (CP), known as the 20S proteasome, capped at one or both ends by the 19S regulatory particle (RP/PA700). The RP/PA700 complex is composed of at least 17 different subunits in two subcomplexes, the base and the lid, which form the portions proximal and distal to the 20S proteolytic core, respectively. Interacts with PUB22 and PUB23. Binds to the translation initiation factors TIF3E1. Interacts with UCH1 and UCH2. Post-translationally, ubiquitinated by PUB22 and PUB23. As to expression, ubiquitous with highest expression in flowers.

Acts as a regulatory subunit of the 26S proteasome which is involved in the ATP-dependent degradation of ubiquitinated proteins. May help to control the degradation of one or more factors that repress cytokinin signaling. Plays an important role for balancing cell expansion with cell proliferation rates during shoot development. This chain is 26S proteasome non-ATPase regulatory subunit 8 homolog A, found in Arabidopsis thaliana (Mouse-ear cress).